A 261-amino-acid chain; its full sequence is Glucose 1-dehydrogenase (261 aa).

Residue 11–35 (AITGAASGLGKAMAIRFGKEQAKVV) coordinates NADP(+). Ser145 contacts substrate. The active-site Proton acceptor is the Tyr158.

It belongs to the short-chain dehydrogenases/reductases (SDR) family. Homotetramer.

It carries out the reaction D-glucose + NAD(+) = D-glucono-1,5-lactone + NADH + H(+). The catalysed reaction is D-glucose + NADP(+) = D-glucono-1,5-lactone + NADPH + H(+). The protein is Glucose 1-dehydrogenase (gdh) of Bacillus subtilis (strain 168).